The sequence spans 159 residues: U1 small nuclear ribonucleoprotein C (159 aa).

Residues Phe-4 to Asp-36 form a Matrin-type zinc finger. Tyr-8 is modified (phosphotyrosine). Ser-17 carries the phosphoserine modification. Lys-52 carries the N6-acetyllysine modification. 2 disordered regions span residues Ile-62 to His-96 and Arg-140 to Arg-159. The span at Pro-63–Met-92 shows a compositional bias: pro residues.

Belongs to the U1 small nuclear ribonucleoprotein C family. In terms of assembly, component of the U1 snRNP. The U1 snRNP is composed of the U1 snRNA and the 7 core Sm proteins SNRPB, SNRPD1, SNRPD2, SNRPD3, SNRPE, SNRPF and SNRPG that assemble in a heptameric protein ring on the Sm site of the small nuclear RNA to form the core snRNP, and at least 3 U1 snRNP-specific proteins SNRNP70/U1-70K, SNRPA/U1-A and SNRPC/U1-C. SNRPC/U1-C interacts with U1 snRNA and the 5' splice-site region of the pre-mRNA. Interacts (via N-terminus) with TIA1 (via C-terminus); thereby promoting spliceosomal U1 snRNP recruitment to 5' splice sites.

Its subcellular location is the nucleus. In terms of biological role, component of the spliceosomal U1 snRNP, which is essential for recognition of the pre-mRNA 5' splice-site and the subsequent assembly of the spliceosome. SNRPC/U1-C is directly involved in initial 5' splice-site recognition for both constitutive and regulated alternative splicing. The interaction with the 5' splice-site seems to precede base-pairing between the pre-mRNA and the U1 snRNA. Stimulates commitment or early (E) complex formation by stabilizing the base pairing of the 5' end of the U1 snRNA and the 5' splice-site region. This Homo sapiens (Human) protein is U1 small nuclear ribonucleoprotein C.